The primary structure comprises 258 residues: Flagellar brake protein YcgR (258 aa).

Residues 131 to 248 enclose the PilZ domain; that stretch reads QKREYYRVAT…ALSLIQRYIT (118 aa).

It belongs to the YcgR family. As to quaternary structure, monomer. Interacts with the flagellar basal bodies.

The protein resides in the bacterial flagellum basal body. Acts as a flagellar brake, regulating swimming and swarming in a bis-(3'-5') cyclic diguanylic acid (c-di-GMP)-dependent manner. Binds 1 c-di-GMP dimer per subunit. Increasing levels of c-di-GMP lead to decreased motility. In Nitrosospira multiformis (strain ATCC 25196 / NCIMB 11849 / C 71), this protein is Flagellar brake protein YcgR.